Consider the following 493-residue polypeptide: Transcript termination protein A18 (493 aa).

In terms of domain architecture, Helicase ATP-binding spans M100–S256. Residue L113 to T120 participates in ATP binding. Positions D206 to H209 match the DESH box motif.

This sequence belongs to the helicase family. Poxviruses subfamily. As to quaternary structure, interacts with G2. Might be part of a transcription complex composed at least of G2, A18, and H5.

The protein resides in the virion. DNA helicase which seems to act as a postreplicative transcription termination factor. Involved in ATP-dependent release of nascent RNA. Forms a stable complex with single-stranded DNA, and to a lesser extent RNA. This Vaccinia virus (strain Tian Tan) (VACV) protein is Transcript termination protein A18.